The chain runs to 192 residues: MSFYRGTASHPWHDLHPGNDAPNFVSCVIEIPRGSKVKYELDKDTGLCFVDRILYSSVVYPHNYGFVPKTLCEDGDPLDVLVLMQEPVVPMCFLRAKPIGVMQMLDQGERDDKLIAVHADDPEYKGFTDISQLPPHRLAEIKRFFEDYKKNEHKEVVVDDFLGAEEAKKVVKDSLNMYQEHYVPRKLRNVYE.

Residues lysine 38, arginine 52, and tyrosine 64 each contribute to the substrate site. Aspartate 74, aspartate 79, and aspartate 111 together coordinate Mg(2+). Tyrosine 148 is a binding site for substrate.

As to quaternary structure, monomer. Mg(2+) serves as cofactor. In terms of processing, the N-terminus is blocked.

The protein localises to the mitochondrion. It catalyses the reaction diphosphate + H2O = 2 phosphate + H(+). The protein is Soluble inorganic pyrophosphatase 2 (ppa2) of Chlamydomonas reinhardtii (Chlamydomonas smithii).